The following is a 512-amino-acid chain: Ribose import ATP-binding protein RbsA 1 (512 aa).

ABC transporter domains lie at 8-244 (FRME…IGRE) and 254-502 (AHRG…LNIA). Residue 40–47 (GENGAGKS) participates in ATP binding.

It belongs to the ABC transporter superfamily. Ribose importer (TC 3.A.1.2.1) family. As to quaternary structure, the complex is composed of an ATP-binding protein (RbsA), two transmembrane proteins (RbsC) and a solute-binding protein (RbsB).

The protein resides in the cell inner membrane. The catalysed reaction is D-ribose(out) + ATP + H2O = D-ribose(in) + ADP + phosphate + H(+). Functionally, part of the ABC transporter complex RbsABC involved in ribose import. Responsible for energy coupling to the transport system. This Rhizobium johnstonii (strain DSM 114642 / LMG 32736 / 3841) (Rhizobium leguminosarum bv. viciae) protein is Ribose import ATP-binding protein RbsA 1.